We begin with the raw amino-acid sequence, 603 residues long: Isocitrate dehydrogenase kinase/phosphatase (603 aa).

Residues 327-333 (APGIKGL) and Lys348 each bind ATP. Residue Asp383 is part of the active site.

Belongs to the AceK family.

Its subcellular location is the cytoplasm. It carries out the reaction L-seryl-[isocitrate dehydrogenase] + ATP = O-phospho-L-seryl-[isocitrate dehydrogenase] + ADP + H(+). In terms of biological role, bifunctional enzyme which can phosphorylate or dephosphorylate isocitrate dehydrogenase (IDH) on a specific serine residue. This is a regulatory mechanism which enables bacteria to bypass the Krebs cycle via the glyoxylate shunt in response to the source of carbon. When bacteria are grown on glucose, IDH is fully active and unphosphorylated, but when grown on acetate or ethanol, the activity of IDH declines drastically concomitant with its phosphorylation. The polypeptide is Isocitrate dehydrogenase kinase/phosphatase (Burkholderia thailandensis (strain ATCC 700388 / DSM 13276 / CCUG 48851 / CIP 106301 / E264)).